The following is a 65-amino-acid chain: Large ribosomal subunit protein bL35 (65 aa).

The span at 1–16 (MPKMKTKKSAAKRFKV) shows a compositional bias: basic residues. The tract at residues 1–25 (MPKMKTKKSAAKRFKVRGSGSIKRG) is disordered.

This sequence belongs to the bacterial ribosomal protein bL35 family.

In Bordetella parapertussis (strain 12822 / ATCC BAA-587 / NCTC 13253), this protein is Large ribosomal subunit protein bL35.